A 304-amino-acid polypeptide reads, in one-letter code: ATP phosphoribosyltransferase (304 aa).

This sequence belongs to the ATP phosphoribosyltransferase family. Long subfamily. Mg(2+) is required as a cofactor.

Its subcellular location is the cytoplasm. The catalysed reaction is 1-(5-phospho-beta-D-ribosyl)-ATP + diphosphate = 5-phospho-alpha-D-ribose 1-diphosphate + ATP. The protein operates within amino-acid biosynthesis; L-histidine biosynthesis; L-histidine from 5-phospho-alpha-D-ribose 1-diphosphate: step 1/9. Its activity is regulated as follows. Feedback inhibited by histidine. Functionally, catalyzes the condensation of ATP and 5-phosphoribose 1-diphosphate to form N'-(5'-phosphoribosyl)-ATP (PR-ATP). Has a crucial role in the pathway because the rate of histidine biosynthesis seems to be controlled primarily by regulation of HisG enzymatic activity. The protein is ATP phosphoribosyltransferase of Xylella fastidiosa (strain 9a5c).